We begin with the raw amino-acid sequence, 318 residues long: MAGLKRRASQVWPEEHGEQEHGLYSLHRMFDIVGTHLTHRDVRVLSFLFVDVIDDHERGLIRNGRDFLLALERQGRCDESNFRQVLQLLRIITRHDLLPYVTLKRRRAVCPDLVDKYLEETSIRYVTPRALSDPEPRPPQPSKTVPPHYPVVCCPTSGPQMCSKRPARGRATLGSQRKRRKSVTPDPKEKQTCDIRLRVRAEYCQHETALQGNVFSNKQDPLERQFERFNQANTILKSRDLGSIICDIKFSELTYLDAFWRDYINGSLLEALKGVFITDSLKQAVGHEAIKLLVNVDEEDYELGRQKLLRNLMLQALP.

The DED domain occupies 25–103 (SLHRMFDIVG…RHDLLPYVTL (79 aa)). 2 disordered regions span residues 128–147 (PRAL…TVPP) and 160–191 (QMCS…KEKQ).

Interacts with CASP8, CASP10, KRT8, KRT18, CASP3 and FADD. Homodimerizes and heterodimerizes with DEDD2. Exists predominantly in a mono- or diubiquitinated form. As to expression, widely expressed with highest levels in testis.

The protein localises to the cytoplasm. Its subcellular location is the nucleus. It localises to the nucleolus. In terms of biological role, a scaffold protein that directs CASP3 to certain substrates and facilitates their ordered degradation during apoptosis. May also play a role in mediating CASP3 cleavage of KRT18. Regulates degradation of intermediate filaments during apoptosis. May play a role in the general transcription machinery in the nucleus and might be an important regulator of the activity of GTF3C3. Inhibits DNA transcription in vitro. This is Death effector domain-containing protein (DEDD) from Homo sapiens (Human).